Consider the following 79-residue polypeptide: Calcium/calmodulin-dependent protein kinase II inhibitor 2 (79 aa).

An inhibitory domain region spans residues 43–69 (KRPPKLGQIGRAKRVVIEDDRIDEVLK).

It belongs to the CAMK2N family.

Its subcellular location is the nucleus. The protein resides in the cytoplasm. The protein localises to the cytosol. Its function is as follows. Potent and specific cellular inhibitor of CaM-kinase II (CAMK2). Traps Ca(2+)/calmodulin on CAMK2. This Xenopus tropicalis (Western clawed frog) protein is Calcium/calmodulin-dependent protein kinase II inhibitor 2 (camk2n2).